The sequence spans 528 residues: Chaperonin GroEL, chloroplastic (528 aa).

Residues 29 to 32, 86 to 90, G414, and D496 each bind ATP; these read TLGP and DGTTT.

It belongs to the chaperonin (HSP60) family. As to quaternary structure, forms a cylinder of 14 subunits composed of two heptameric rings stacked back-to-back. Interacts with the co-chaperonin GroES.

Its subcellular location is the plastid. The protein resides in the chloroplast. The catalysed reaction is ATP + H2O + a folded polypeptide = ADP + phosphate + an unfolded polypeptide.. Functionally, together with its co-chaperonin GroES, plays an essential role in assisting protein folding. The GroEL-GroES system forms a nano-cage that allows encapsulation of the non-native substrate proteins and provides a physical environment optimized to promote and accelerate protein folding. This Gracilaria tenuistipitata var. liui (Red alga) protein is Chaperonin GroEL, chloroplastic.